Reading from the N-terminus, the 173-residue chain is MLKSEKEEMIKELHEKFSRTTSAVVAEFTKVDVETVTKLRKKFREGNVEYKVIKNTLARRAAQGTSVSVIADDFTGPVALCISYGDVVAPAKILVEFAKDIEDKIKIRTAVVEGRKVDVAGVKALAKLPGLPELRAQLLGVISEPASKLVRTIAAPGSQLARVVQANADKAQG.

The protein belongs to the universal ribosomal protein uL10 family. As to quaternary structure, part of the ribosomal stalk of the 50S ribosomal subunit. The N-terminus interacts with L11 and the large rRNA to form the base of the stalk. The C-terminus forms an elongated spine to which L12 dimers bind in a sequential fashion forming a multimeric L10(L12)X complex.

Its function is as follows. Forms part of the ribosomal stalk, playing a central role in the interaction of the ribosome with GTP-bound translation factors. In Myxococcus xanthus (strain DK1622), this protein is Large ribosomal subunit protein uL10.